The following is a 900-amino-acid chain: Zinc finger protein 62 homolog (900 aa).

The interval 1-97 (MSHLKTSTED…EASEKSLHLS (97 aa)) is disordered. K5 is covalently cross-linked (Glycyl lysine isopeptide (Lys-Gly) (interchain with G-Cter in SUMO2)). A compositionally biased stretch (acidic residues) spans 9–18 (EDEEPTEEYE). Basic and acidic residues predominate over residues 47 to 73 (SKVENQQKKPVENRMKEDKSSIREAIS). Residues K48, K62, K65, K82, and K92 each participate in a glycyl lysine isopeptide (Lys-Gly) (interchain with G-Cter in SUMO2) cross-link. A compositionally biased stretch (basic and acidic residues) spans 83-94 (TEQEGEASEKSL). 13 consecutive C2H2-type zinc fingers follow at residues 225 to 247 (CKCD…KRIH), 253 to 275 (YECG…KRIH), 281 to 303 (YECD…KRIH), 309 to 331 (YECD…KSIH), 337 to 359 (YKCD…KVIH), 365 to 387 (YECD…KRIH), 393 to 415 (YKCD…KSIH), 421 to 443 (HECK…RTIH), 449 to 471 (YVCD…RRLH), 477 to 499 (YKCD…KGIH), 505 to 527 (YKCS…KRIH), 533 to 555 (FGCD…KRIH), and 561 to 583 (YKCE…KSVH). A Glycyl lysine isopeptide (Lys-Gly) (interchain with G-Cter in SUMO2) cross-link involves residue K587. C2H2-type zinc fingers lie at residues 589-611 (FKCD…KKVH), 617-639 (YKCD…RRVH), 645-667 (YECD…KRIH), 673-695 (YECD…KSTH), 701-723 (HTCD…KRVH), 729-751 (FKCV…KRIH), 757-779 (YVCD…KRIH), 785-807 (YECD…KSVH), 813-834 (YNCE…KRIH), and 840-862 (YRCN…KRTH). K748 is covalently cross-linked (Glycyl lysine isopeptide (Lys-Gly) (interchain with G-Cter in SUMO2)). K882 participates in a covalent cross-link: Glycyl lysine isopeptide (Lys-Gly) (interchain with G-Cter in SUMO2).

It belongs to the krueppel C2H2-type zinc-finger protein family.

The protein resides in the nucleus. In terms of biological role, may play a role in differentiating skeletal muscle. The sequence is that of Zinc finger protein 62 homolog (ZFP62) from Homo sapiens (Human).